The chain runs to 676 residues: Methionine--tRNA ligase (676 aa).

The 'HIGH' region motif lies at 15–25; sequence PYANGSIHLGH. Zn(2+) is bound by residues cysteine 146, cysteine 149, cysteine 159, and cysteine 162. Residues 332–336 carry the 'KMSKS' region motif; sequence KMSKS. Lysine 335 lines the ATP pocket. The tRNA-binding domain maps to 574–676; that stretch reads DFAKVDMRIA…SGAQPGQQVK (103 aa).

Belongs to the class-I aminoacyl-tRNA synthetase family. MetG type 1 subfamily. In terms of assembly, homodimer. Zn(2+) is required as a cofactor.

It localises to the cytoplasm. The enzyme catalyses tRNA(Met) + L-methionine + ATP = L-methionyl-tRNA(Met) + AMP + diphosphate. Is required not only for elongation of protein synthesis but also for the initiation of all mRNA translation through initiator tRNA(fMet) aminoacylation. The protein is Methionine--tRNA ligase of Erwinia tasmaniensis (strain DSM 17950 / CFBP 7177 / CIP 109463 / NCPPB 4357 / Et1/99).